Reading from the N-terminus, the 138-residue chain is ATP synthase epsilon chain, chloroplastic (138 aa).

This sequence belongs to the ATPase epsilon chain family. As to quaternary structure, F-type ATPases have 2 components, CF(1) - the catalytic core - and CF(0) - the membrane proton channel. CF(1) has five subunits: alpha(3), beta(3), gamma(1), delta(1), epsilon(1). CF(0) has three main subunits: a, b and c.

It localises to the plastid. The protein resides in the chloroplast thylakoid membrane. Produces ATP from ADP in the presence of a proton gradient across the membrane. The chain is ATP synthase epsilon chain, chloroplastic from Huperzia lucidula (Shining clubmoss).